The chain runs to 152 residues: Putative aluminum-activated malate transporter 11 (152 aa).

Transmembrane regions (helical) follow at residues 48-68 and 78-98; these read VIHA…YFME and AIWA…VEGL.

This sequence belongs to the aromatic acid exporter (TC 2.A.85) family.

It localises to the membrane. In terms of biological role, malate transporter. The polypeptide is Putative aluminum-activated malate transporter 11 (ALMT11) (Arabidopsis thaliana (Mouse-ear cress)).